The primary structure comprises 320 residues: Malate dehydrogenase (320 aa).

Residues 10–15 (GSGMIG) and Asp-34 contribute to the NAD(+) site. Substrate is bound by residues Arg-83 and Arg-89. NAD(+) is bound by residues Asn-96 and 119 to 121 (ITN). Residues Asn-121 and Arg-152 each contribute to the substrate site. The active-site Proton acceptor is His-176.

The protein belongs to the LDH/MDH superfamily. MDH type 3 family.

It carries out the reaction (S)-malate + NAD(+) = oxaloacetate + NADH + H(+). Catalyzes the reversible oxidation of malate to oxaloacetate. The sequence is that of Malate dehydrogenase from Rhizobium johnstonii (strain DSM 114642 / LMG 32736 / 3841) (Rhizobium leguminosarum bv. viciae).